We begin with the raw amino-acid sequence, 352 residues long: Small ribosomal subunit biogenesis GTPase RsgA 1 (352 aa).

The tract at residues 1–24 (MAKKKKLTQGQVRRVRDNQQKRLK) is disordered. The CP-type G domain occupies 104-272 (TSVLTRPDYY…LIDSPGVREF (169 aa)). Residues 160-163 (NKID) and 214-222 (GQSGVGKSS) contribute to the GTP site. Zn(2+) contacts are provided by cysteine 296, cysteine 301, histidine 303, and cysteine 309.

Belongs to the TRAFAC class YlqF/YawG GTPase family. RsgA subfamily. As to quaternary structure, monomer. Associates with 30S ribosomal subunit, binds 16S rRNA. Requires Zn(2+) as cofactor.

The protein localises to the cytoplasm. In terms of biological role, one of several proteins that assist in the late maturation steps of the functional core of the 30S ribosomal subunit. Helps release RbfA from mature subunits. May play a role in the assembly of ribosomal proteins into the subunit. Circularly permuted GTPase that catalyzes slow GTP hydrolysis, GTPase activity is stimulated by the 30S ribosomal subunit. The sequence is that of Small ribosomal subunit biogenesis GTPase RsgA 1 from Vibrio vulnificus (strain CMCP6).